We begin with the raw amino-acid sequence, 167 residues long: Interferon gamma (167 aa).

Residues 1-23 form the signal peptide; that stretch reads MSYTSYILAFQLCLILGSYGCYC. Position 24 is a pyrrolidone carboxylic acid (glutamine 24). Residues asparagine 41, asparagine 108, and asparagine 117 are each glycosylated (N-linked (GlcNAc...) asparagine).

This sequence belongs to the type II (or gamma) interferon family. In terms of assembly, homodimer. Interacts with IFNGR1 (via extracellular domain); this interaction promotes IFNGR1 dimerization. In terms of tissue distribution, released primarily from activated T lymphocytes.

It localises to the secreted. Its function is as follows. Type II interferon produced by immune cells such as T-cells and NK cells that plays crucial roles in antimicrobial, antiviral, and antitumor responses by activating effector immune cells and enhancing antigen presentation. Primarily signals through the JAK-STAT pathway after interaction with its receptor IFNGR1 to affect gene regulation. Upon IFNG binding, IFNGR1 intracellular domain opens out to allow association of downstream signaling components JAK2, JAK1 and STAT1, leading to STAT1 activation, nuclear translocation and transcription of IFNG-regulated genes. Many of the induced genes are transcription factors such as IRF1 that are able to further drive regulation of a next wave of transcription. Plays a role in class I antigen presentation pathway by inducing a replacement of catalytic proteasome subunits with immunoproteasome subunits. In turn, increases the quantity, quality, and repertoire of peptides for class I MHC loading. Increases the efficiency of peptide generation also by inducing the expression of activator PA28 that associates with the proteasome and alters its proteolytic cleavage preference. Up-regulates as well MHC II complexes on the cell surface by promoting expression of several key molecules such as cathepsins B/CTSB, H/CTSH, and L/CTSL. Participates in the regulation of hematopoietic stem cells during development and under homeostatic conditions by affecting their development, quiescence, and differentiation. In Oryctolagus cuniculus (Rabbit), this protein is Interferon gamma (IFNG).